The chain runs to 823 residues: Sphingomyelin phosphodiesterase 4 (823 aa).

Residues S130 and S245 each carry the phosphoserine modification. T665 is modified (phosphothreonine). S749 carries the phosphoserine modification. Residues 776–796 (LLLLLMAFFVASLFCIGPLSC) traverse the membrane as a helical segment.

It depends on Mg(2+) as a cofactor. In terms of tissue distribution, expressed in skeletal muscle (at protein level). As to expression, expressed in skeletal muscle but a lower levels than isoform 1 (at protein level).

The protein resides in the endoplasmic reticulum membrane. The protein localises to the golgi apparatus membrane. It is found in the nucleus envelope. It localises to the cell membrane. Its subcellular location is the sarcolemma. The enzyme catalyses a sphingomyelin + H2O = phosphocholine + an N-acylsphing-4-enine + H(+). With respect to regulation, activated by phosphatidylserine and tumor necrosis factor (TNF). Inhibited by scyphostatin. In terms of biological role, catalyzes the hydrolysis of membrane sphingomyelin to form phosphorylcholine and ceramide. It has a relevant role in the homeostasis of membrane sphingolipids, thereby influencing membrane integrity, and endoplasmic reticulum organization and function. May sensitize cells to DNA damage-induced apoptosis. In skeletal muscle, mediates TNF-stimulated oxidant production. This chain is Sphingomyelin phosphodiesterase 4 (Smpd4), found in Mus musculus (Mouse).